We begin with the raw amino-acid sequence, 127 residues long: Fumarate reductase subunit C (127 aa).

Transmembrane regions (helical) follow at residues 30-50 (ATVLPLILFTIFLTFGLGSLV), 67-87 (IVVAINIVALLGSLFHAQTFF), and 107-127 (IIVLTQWAAVAFISLIVLIVM).

Belongs to the FrdC family. In terms of assembly, part of an enzyme complex containing four subunits: a flavoprotein (FrdA), an iron-sulfur protein (FrdB), and two hydrophobic anchor proteins (FrdC and FrdD).

The protein localises to the cell inner membrane. In terms of biological role, anchors the catalytic components of the fumarate reductase complex to the cell membrane, binds quinones. The chain is Fumarate reductase subunit C from Vibrio campbellii (strain ATCC BAA-1116).